The sequence spans 411 residues: Translation initiation factor 2 subunit gamma (411 aa).

A tr-type G domain is found at 9-203; the sequence is QAEVNIGMVG…AIEDFIPTPK (195 aa). Residues 18-25 form a G1 region; sequence GHVDHGKT. The Mg(2+) site is built by Asp21, Thr25, Gly46, and Thr48. 21–26 contributes to the GTP binding site; it reads DHGKTT. Residues 46–50 form a G2 region; that stretch reads GITIK. Positions 61, 64, 73, and 76 each coordinate Zn(2+). The tract at residues 90–93 is G3; sequence DAPG. GTP-binding positions include 146 to 149 and 181 to 183; these read NKIE and SAL. Residues 146-149 form a G4 region; sequence NKIE. The G5 stretch occupies residues 181-183; that stretch reads SAL.

This sequence belongs to the TRAFAC class translation factor GTPase superfamily. Classic translation factor GTPase family. EIF2G subfamily. In terms of assembly, heterotrimer composed of an alpha, a beta and a gamma chain. The cofactor is Mg(2+).

The enzyme catalyses GTP + H2O = GDP + phosphate + H(+). Its function is as follows. eIF-2 functions in the early steps of protein synthesis by forming a ternary complex with GTP and initiator tRNA. This is Translation initiation factor 2 subunit gamma from Pyrococcus horikoshii (strain ATCC 700860 / DSM 12428 / JCM 9974 / NBRC 100139 / OT-3).